We begin with the raw amino-acid sequence, 75 residues long: Small integral membrane protein 7-A (75 aa).

The first 17 residues, 1–17, serve as a signal peptide directing secretion; sequence MIGDLLLFGTLLVNAGA. Topologically, residues 18-53 are extracellular; sequence VLNFKLKKKESQGFGDDLTEATTGDNIREFLLSLRY. Residues 54–74 form a helical membrane-spanning segment; the sequence is FRIFIALWNIFMMFCMIVLFG. Position 75 (serine 75) is a topological domain, cytoplasmic.

This sequence belongs to the SMIM7 family.

The protein localises to the membrane. The sequence is that of Small integral membrane protein 7-A (smim7-a) from Xenopus laevis (African clawed frog).